Here is a 264-residue protein sequence, read N- to C-terminus: Neuferricin (264 aa).

A signal peptide spans 1–22 (MLRCGGRGLLLGLAVAAAAVMA). One can recognise a Cytochrome b5 heme-binding domain in the interval 35 to 134 (FRLFIPEELS…KNYVCVGRVT (100 aa)).

Belongs to the cytochrome b5 family. MAPR subfamily.

It localises to the secreted. In terms of biological role, heme-binding protein which promotes neuronal but not astrocyte differentiation. This chain is Neuferricin, found in Homo sapiens (Human).